A 734-amino-acid polypeptide reads, in one-letter code: Cytoplasmic polyadenylation element-binding protein 3 (734 aa).

Disordered stretches follow at residues 1-31 (MDRN…RNVP), 98-185 (GSKK…AARN), and 220-283 (RGSL…LPPR). Residues 16–26 (PAEHPGDEKSG) are compositionally biased toward basic and acidic residues. 2 stretches are compositionally biased toward low complexity: residues 121-140 (SRRT…SPSR) and 232-242 (KSFSSTTTSSS). Residues 243–256 (PEKEREKEKEKIEQ) are compositionally biased toward basic and acidic residues. A compositionally biased stretch (polar residues) spans 259–275 (YGTTQRQSVNSQQSSAS). Residues 294 to 316 (IFVGGVPWDITEAALKDSFGEFG) enclose the RRM domain. Disordered regions lie at residues 564–593 (KAYQ…SNNS) and 630–657 (TVYD…SNSN). Over residues 576 to 593 (LSSNSPSKARDGQNSNNS) the composition is skewed to low complexity.

In terms of biological role, cytoplasmic polyadenylation element binding protein that binds to and regulates the translation of specific mRNAs. In Caenorhabditis japonica, this protein is Cytoplasmic polyadenylation element-binding protein 3 (cpb-3).